The sequence spans 130 residues: Protein NrdI (130 aa).

It belongs to the NrdI family.

Probably involved in ribonucleotide reductase function. This chain is Protein NrdI, found in Staphylococcus carnosus (strain TM300).